The chain runs to 315 residues: Glutamyl-Q tRNA(Asp) synthetase (315 aa).

Residues 12–16 and glutamate 48 each bind L-glutamate; that span reads RFAPS. The 'HIGH' region motif lies at 15–25; it reads PSPSGPLHFGS. 4 residues coordinate Zn(2+): cysteine 104, cysteine 106, tyrosine 124, and cysteine 128. L-glutamate contacts are provided by tyrosine 181 and arginine 199. A 'KMSKS' region motif is present at residues 237-241; it reads KLSKQ. Lysine 240 is an ATP binding site.

This sequence belongs to the class-I aminoacyl-tRNA synthetase family. GluQ subfamily. Requires Zn(2+) as cofactor.

Its function is as follows. Catalyzes the tRNA-independent activation of glutamate in presence of ATP and the subsequent transfer of glutamate onto a tRNA(Asp). Glutamate is transferred on the 2-amino-5-(4,5-dihydroxy-2-cyclopenten-1-yl) moiety of the queuosine in the wobble position of the QUC anticodon. This chain is Glutamyl-Q tRNA(Asp) synthetase, found in Aromatoleum aromaticum (strain DSM 19018 / LMG 30748 / EbN1) (Azoarcus sp. (strain EbN1)).